Consider the following 481-residue polypeptide: Protein nucleotidyltransferase YdiU (481 aa).

ATP-binding residues include Gly85, Gly87, Arg88, Lys108, Asp120, Gly121, Arg172, and Arg179. Asp248 (proton acceptor) is an active-site residue. 2 residues coordinate Mg(2+): Asn249 and Asp258. ATP is bound at residue Asp258.

This sequence belongs to the SELO family. Requires Mg(2+) as cofactor. It depends on Mn(2+) as a cofactor.

The enzyme catalyses L-seryl-[protein] + ATP = 3-O-(5'-adenylyl)-L-seryl-[protein] + diphosphate. It carries out the reaction L-threonyl-[protein] + ATP = 3-O-(5'-adenylyl)-L-threonyl-[protein] + diphosphate. The catalysed reaction is L-tyrosyl-[protein] + ATP = O-(5'-adenylyl)-L-tyrosyl-[protein] + diphosphate. It catalyses the reaction L-histidyl-[protein] + UTP = N(tele)-(5'-uridylyl)-L-histidyl-[protein] + diphosphate. The enzyme catalyses L-seryl-[protein] + UTP = O-(5'-uridylyl)-L-seryl-[protein] + diphosphate. It carries out the reaction L-tyrosyl-[protein] + UTP = O-(5'-uridylyl)-L-tyrosyl-[protein] + diphosphate. In terms of biological role, nucleotidyltransferase involved in the post-translational modification of proteins. It can catalyze the addition of adenosine monophosphate (AMP) or uridine monophosphate (UMP) to a protein, resulting in modifications known as AMPylation and UMPylation. In Cereibacter sphaeroides (strain ATCC 17023 / DSM 158 / JCM 6121 / CCUG 31486 / LMG 2827 / NBRC 12203 / NCIMB 8253 / ATH 2.4.1.) (Rhodobacter sphaeroides), this protein is Protein nucleotidyltransferase YdiU.